The following is a 213-amino-acid chain: Probable transaldolase (213 aa).

Lysine 83 (schiff-base intermediate with substrate) is an active-site residue.

The protein belongs to the transaldolase family. Type 3B subfamily.

It is found in the cytoplasm. The enzyme catalyses D-sedoheptulose 7-phosphate + D-glyceraldehyde 3-phosphate = D-erythrose 4-phosphate + beta-D-fructose 6-phosphate. It participates in carbohydrate degradation; pentose phosphate pathway; D-glyceraldehyde 3-phosphate and beta-D-fructose 6-phosphate from D-ribose 5-phosphate and D-xylulose 5-phosphate (non-oxidative stage): step 2/3. Functionally, transaldolase is important for the balance of metabolites in the pentose-phosphate pathway. The protein is Probable transaldolase of Oceanobacillus iheyensis (strain DSM 14371 / CIP 107618 / JCM 11309 / KCTC 3954 / HTE831).